Consider the following 167-residue polypeptide: Ubiquitin-fold modifier-conjugating enzyme 1 (167 aa).

Cysteine 116 acts as the Glycyl thioester intermediate in catalysis.

The protein belongs to the ubiquitin-conjugating enzyme family. UFC1 subfamily. In terms of assembly, interacts with UBA5 (via C-terminus). Interacts with UFL1. Interacts with UFM1.

Its function is as follows. E2-like enzyme which specifically catalyzes the second step in ufmylation. Accepts the ubiquitin-like modifier UFM1 from the E1 enzyme UBA5 and forms an intermediate with UFM1 via a thioester linkage. Ufmylation is involved in various processes, such as ribosome recycling, response to DNA damage, interferon response or reticulophagy (also called ER-phagy). This is Ubiquitin-fold modifier-conjugating enzyme 1 from Salmo salar (Atlantic salmon).